The primary structure comprises 606 residues: Threonine dehydratase 1 biosynthetic, chloroplastic (606 aa).

At Lys154 the chain carries N6-(pyridoxal phosphate)lysine. ACT-like domains follow at residues 432–504 (AVLA…NLTD) and 526–597 (LLCR…MESL).

It belongs to the serine/threonine dehydratase family. The cofactor is pyridoxal 5'-phosphate. Expressed constitutively in all tissues examined including root, stem, petiole, leaf, immature flower bud, unopened flower and opened flower with the highest expression in opened flower and lowest in leaf.

It localises to the plastid. It is found in the chloroplast. The enzyme catalyses L-threonine = 2-oxobutanoate + NH4(+). It participates in amino-acid biosynthesis; L-isoleucine biosynthesis; 2-oxobutanoate from L-threonine: step 1/1. Strongly inhibited by 1 mM isoleucine. Its function is as follows. Has a housekeeping role in isoleucine biosynthesis. This is Threonine dehydratase 1 biosynthetic, chloroplastic from Solanum lycopersicum (Tomato).